Here is a 458-residue protein sequence, read N- to C-terminus: tRNA(Ile)-lysidine synthase (458 aa).

ATP is bound at residue 36–41 (SGGADS).

The protein belongs to the tRNA(Ile)-lysidine synthase family.

It localises to the cytoplasm. The catalysed reaction is cytidine(34) in tRNA(Ile2) + L-lysine + ATP = lysidine(34) in tRNA(Ile2) + AMP + diphosphate + H(+). Functionally, ligates lysine onto the cytidine present at position 34 of the AUA codon-specific tRNA(Ile) that contains the anticodon CAU, in an ATP-dependent manner. Cytidine is converted to lysidine, thus changing the amino acid specificity of the tRNA from methionine to isoleucine. This is tRNA(Ile)-lysidine synthase from Protochlamydia amoebophila (strain UWE25).